Here is a 74-residue protein sequence, read N- to C-terminus: UPF0346 protein BPUM_1890 (74 aa).

The protein belongs to the UPF0346 family.

The chain is UPF0346 protein BPUM_1890 from Bacillus pumilus (strain SAFR-032).